The primary structure comprises 344 residues: Sorting nexin-16 (344 aa).

Residues 1 to 10 (MATPYVPVPM) are compositionally biased toward pro residues. Disordered regions lie at residues 1 to 49 (MATP…DSSV) and 83 to 105 (SIEY…NWED). The span at 14–26 (NSASSFTNNRNQR) shows a compositional bias: polar residues. Low complexity predominate over residues 27-40 (SSSFGSVSTSSNSS). Over residues 88–105 (ARPRDTEEQHPDALNWED) the composition is skewed to basic and acidic residues. The PX domain maps to 105-218 (DRPSTPTILG…EFLCLDDPPG (114 aa)). A 1,2-diacyl-sn-glycero-3-phospho-(1D-myo-inositol-3-phosphate) contacts are provided by arginine 144, threonine 146, and arginine 184. Position 222 is a phosphoserine (serine 222). The stretch at 223–278 (LEESRAFCETLEETNYHLQRELLEKQKEVESLKKLLGEKQLHIDALETRIRTLSLE) forms a coiled coil.

The protein belongs to the sorting nexin family. Homooligomer. Interacts with EGFR.

The protein localises to the early endosome membrane. It is found in the late endosome membrane. Its subcellular location is the cytoplasm. The protein resides in the lysosome. In terms of biological role, may be involved in several stages of intracellular trafficking. Plays a role in protein transport from early to late endosomes. Plays a role in protein transport to the lysosome. Promotes degradation of EGFR after EGF signaling. The chain is Sorting nexin-16 (Snx16) from Rattus norvegicus (Rat).